Consider the following 442-residue polypeptide: UDP-N-acetylmuramoylalanine--D-glutamate ligase (442 aa).

113 to 119 (GSNGKTT) contributes to the ATP binding site.

The protein belongs to the MurCDEF family.

The protein resides in the cytoplasm. The enzyme catalyses UDP-N-acetyl-alpha-D-muramoyl-L-alanine + D-glutamate + ATP = UDP-N-acetyl-alpha-D-muramoyl-L-alanyl-D-glutamate + ADP + phosphate + H(+). It functions in the pathway cell wall biogenesis; peptidoglycan biosynthesis. Functionally, cell wall formation. Catalyzes the addition of glutamate to the nucleotide precursor UDP-N-acetylmuramoyl-L-alanine (UMA). The polypeptide is UDP-N-acetylmuramoylalanine--D-glutamate ligase (Coxiella burnetii (strain Dugway 5J108-111)).